The primary structure comprises 238 residues: Uridylate kinase (238 aa).

12–15 (KLSG) is an ATP binding site. Gly-54 contributes to the UMP binding site. ATP-binding residues include Gly-55 and Arg-59. UMP is bound by residues Asp-74 and 135–142 (TGNPFFTT). ATP contacts are provided by Thr-162, Asn-163, Tyr-168, and Asp-171.

This sequence belongs to the UMP kinase family. Homohexamer.

The protein resides in the cytoplasm. The catalysed reaction is UMP + ATP = UDP + ADP. It functions in the pathway pyrimidine metabolism; CTP biosynthesis via de novo pathway; UDP from UMP (UMPK route): step 1/1. Inhibited by UTP. Functionally, catalyzes the reversible phosphorylation of UMP to UDP. The chain is Uridylate kinase from Rhodopseudomonas palustris (strain BisA53).